We begin with the raw amino-acid sequence, 417 residues long: mRNA export factor ICP27 homolog (417 aa).

The segment covering 1–28 (MEDIIEGGISSDDDFDSSDSSSDEEESD) has biased composition (acidic residues). The interval 1-143 (MEDIIEGGIS…NGPLRNGPPR (143 aa)) is disordered. The segment at 64-120 (RQRSPITWEHQSPLSRVYRSPSPMRFGKRPRISSNSTSRSCKTSWADRVREAAAQRR) is interaction with RNA. The short motif at 88–94 (RFGKRPR) is the Nuclear localization signal element. A compositionally biased stretch (low complexity) spans 96–107 (SSNSTSRSCKTS). The interaction with host ALYREF or mouse ALYREF2 stretch occupies residues 106–120 (TSWADRVREAAAQRR). The span at 108–117 (WADRVREAAA) shows a compositional bias: basic and acidic residues. The Nuclear localization signal signature appears at 118 to 127 (QRRPSRPFRK). Over residues 120 to 130 (RPSRPFRKPYS) the composition is skewed to basic residues. Residues 132 to 141 (PRNGPLRNGP) are compositionally biased toward low complexity. Residues cysteine 295, histidine 385, cysteine 389, and cysteine 394 each contribute to the Zn(2+) site. The CHC2-type zinc-finger motif lies at 295–394 (CLMQTTPQDH…HLNKCPSSTC (100 aa)).

This sequence belongs to the HHV-1 ICP27 protein family. Homodimer. Homodimerization is required for transactivation. Interacts with host ALYREF and with mouse ALYREF2. Associates in a complex with RNA, and host export factors NXF1/TAP and ALYREF or ALYREF2; these interactions allow nuclear export of viral transcripts.

It localises to the host cytoplasm. The protein resides in the host nucleus. Functionally, probably acts as a viral splicing factor that regulates viral RNA splicing. Functions as a multifunctional regulator of the expression of viral lytic genes. Early protein that promotes the accumulation and nuclear export of viral intronless RNA transcripts by interacting with mRNAs and cellular export proteins. This Saimiriine herpesvirus 2 (strain 11) (SaHV-2) protein is mRNA export factor ICP27 homolog (EJRF1).